The chain runs to 603 residues: Vacuolar protein sorting-associated protein 33A (603 aa).

Belongs to the STXBP/unc-18/SEC1 family. In terms of assembly, probable component of the homotypic fusion and vacuole protein sorting (HOPS) complex consisting of the core class C Vps proteins vps-11, vps-16, vps-18, and which further associates with vps-33.1, vps-39 and vps-41. Interacts with spe-39. As to expression, ubiquitously expressed at high levels in somatic tissues including the pharynx, muscles, hypodermis, neurons, coelomocytes and spermatheca. Expressed in the intestine.

The protein resides in the lysosome. It is found in the early endosome. Its subcellular location is the late endosome. It localises to the apical cell membrane. Plays a role in vesicle-mediated protein trafficking to lysosomal compartments including the endocytic membrane transport pathways. Believed to act as a component of the putative HOPS endosomal tethering complex which is proposed to be involved in the rab-5-to-rab-7 endosome conversion probably implicating sand-1, and via binding SNAREs and SNARE complexes to mediate tethering and docking events during SNARE-mediated membrane fusion. The HOPS complex is proposed to be recruited to rab-7 on the late endosomal membrane and to regulate late endocytic, phagocytic and autophagic traffic towards lysosomes. Within the HOPS complex, contributes to the normal development of gut granules in embryonic and adult intestinal cells. Required for endosome/lysosome fusion. Required for early embryonic development. This is Vacuolar protein sorting-associated protein 33A from Caenorhabditis elegans.